Here is a 169-residue protein sequence, read N- to C-terminus: Peptide deformylase (169 aa).

Residues Cys91 and His133 each contribute to the Fe cation site. Glu134 is a catalytic residue. Residue His137 participates in Fe cation binding.

This sequence belongs to the polypeptide deformylase family. Fe(2+) is required as a cofactor.

It catalyses the reaction N-terminal N-formyl-L-methionyl-[peptide] + H2O = N-terminal L-methionyl-[peptide] + formate. Functionally, removes the formyl group from the N-terminal Met of newly synthesized proteins. Requires at least a dipeptide for an efficient rate of reaction. N-terminal L-methionine is a prerequisite for activity but the enzyme has broad specificity at other positions. In Erwinia tasmaniensis (strain DSM 17950 / CFBP 7177 / CIP 109463 / NCPPB 4357 / Et1/99), this protein is Peptide deformylase.